A 165-amino-acid polypeptide reads, in one-letter code: MKLKGRVLKYGDNVDTDVIIPARYLNTSNPDELARHCMEDIDPDFASKVKDGDIIVAGKNFGSGSSREHAPLAIKSAGVSCVIAESFARIFYRNAINIGLPILECKDVTDRIEEGDLVEVDLNEGKIKLPEKNINIDSTPFPSFMQEIIKAGGLIEKIKGGIKHA.

It belongs to the LeuD family. LeuD type 2 subfamily. Heterodimer of LeuC and LeuD.

It catalyses the reaction (2R,3S)-3-isopropylmalate = (2S)-2-isopropylmalate. The protein operates within amino-acid biosynthesis; L-leucine biosynthesis; L-leucine from 3-methyl-2-oxobutanoate: step 2/4. Its function is as follows. Catalyzes the isomerization between 2-isopropylmalate and 3-isopropylmalate, via the formation of 2-isopropylmaleate. The protein is 3-isopropylmalate dehydratase small subunit of Halothermothrix orenii (strain H 168 / OCM 544 / DSM 9562).